We begin with the raw amino-acid sequence, 408 residues long: Argininosuccinate synthase (408 aa).

ATP contacts are provided by residues 10-18 (AYSGGLDTS) and Ala37. The L-citrulline site is built by Tyr90 and Ser95. Gly120 contributes to the ATP binding site. L-aspartate contacts are provided by Thr122, Asn126, and Asp127. Residue Asn126 participates in L-citrulline binding. 5 residues coordinate L-citrulline: Arg130, Ser182, Ser191, Glu267, and Tyr279.

This sequence belongs to the argininosuccinate synthase family. Type 1 subfamily. In terms of assembly, homotetramer.

The protein resides in the cytoplasm. It catalyses the reaction L-citrulline + L-aspartate + ATP = 2-(N(omega)-L-arginino)succinate + AMP + diphosphate + H(+). The protein operates within amino-acid biosynthesis; L-arginine biosynthesis; L-arginine from L-ornithine and carbamoyl phosphate: step 2/3. The sequence is that of Argininosuccinate synthase from Paraburkholderia phytofirmans (strain DSM 17436 / LMG 22146 / PsJN) (Burkholderia phytofirmans).